The following is a 479-amino-acid chain: uncharacterized protein (479 aa).

Residues 180-203 (LGGEHSDSTNTELANPSSTTTRIT) are disordered. Polar residues predominate over residues 187–202 (STNTELANPSSTTTRI). The 223-residue stretch at 240–462 (PGTTPEVVSY…LKPLVDAGYS (223 aa)) folds into the PE-PPE domain.

Belongs to the mycobacterial PPE family.

This is an uncharacterized protein from Mycobacterium tuberculosis (strain CDC 1551 / Oshkosh).